The sequence spans 650 residues: Probable acyl-CoA dehydrogenase FadE10 (650 aa).

The disordered stretch occupies residues 1 to 23 (MAQQTQVTEEQARALAEESRESG). The segment covering 10-23 (EQARALAEESRESG) has biased composition (basic and acidic residues). Residue glutamate 422 is the Proton acceptor of the active site.

It belongs to the acyl-CoA dehydrogenase family. Requires FAD as cofactor.

The catalysed reaction is a 2,3-saturated acyl-CoA + A = a 2,3-dehydroacyl-CoA + AH2. This chain is Probable acyl-CoA dehydrogenase FadE10 (fadE10), found in Mycobacterium tuberculosis (strain CDC 1551 / Oshkosh).